The following is a 605-amino-acid chain: UvrABC system protein C (605 aa).

One can recognise a GIY-YIG domain in the interval Thr13–Val92. The UVR domain maps to Ser205 to Ala240.

Belongs to the UvrC family. Interacts with UvrB in an incision complex.

The protein resides in the cytoplasm. In terms of biological role, the UvrABC repair system catalyzes the recognition and processing of DNA lesions. UvrC both incises the 5' and 3' sides of the lesion. The N-terminal half is responsible for the 3' incision and the C-terminal half is responsible for the 5' incision. The sequence is that of UvrABC system protein C from Chlamydia caviae (strain ATCC VR-813 / DSM 19441 / 03DC25 / GPIC) (Chlamydophila caviae).